The primary structure comprises 187 residues: Chlorobenzene dioxygenase subunit beta (187 aa).

Belongs to the bacterial ring-hydroxylating dioxygenase beta subunit family. As to quaternary structure, this dioxygenase system consists of four proteins: the two subunits of the oxygenase component (TecA1 and TecA2), a ferredoxin (TecA3) and a ferredoxin reductase (TecA4).

It carries out the reaction chlorobenzene + NADH + O2 + H(+) = (1R,2R)-3-chlorocyclohexa-3,5-diene-1,2-diol + NAD(+). It participates in aromatic compound metabolism. In terms of biological role, part of the oxygenase component of the chlorobenzene dioxygenase system that catalyzes the dihydroxylation of a range of aromatic compounds, including chlorinated benzenes and toluenes, and dinuclear aromatics such as biphenyl and dibenzo-p-dioxin. The beta subunit is not directly involved in the control of substrate specificity. In Cupriavidus sp. (strain PS12), this protein is Chlorobenzene dioxygenase subunit beta.